We begin with the raw amino-acid sequence, 557 residues long: Formate--tetrahydrofolate ligase 2 (557 aa).

66–73 (TPAGEGKT) lines the ATP pocket.

Belongs to the formate--tetrahydrofolate ligase family.

The catalysed reaction is (6S)-5,6,7,8-tetrahydrofolate + formate + ATP = (6R)-10-formyltetrahydrofolate + ADP + phosphate. It participates in one-carbon metabolism; tetrahydrofolate interconversion. The sequence is that of Formate--tetrahydrofolate ligase 2 from Streptococcus pyogenes serotype M1.